The primary structure comprises 1272 residues: CST complex subunit CTC1 (1272 aa).

The protein belongs to the CTC1 family. Component of the CST complex, composed of CTC1, TEN1 and STN1. Interacts with POT1A.

It localises to the nucleus. It is found in the chromosome. Its subcellular location is the telomere. In terms of biological role, component of the CST complex, a complex that binds to single-stranded DNA and is required to protect telomeres from DNA degradation. The CST complex binds single-stranded DNA with high affinity in a sequence-independent manner, while isolated subunits bind DNA with low affinity by themselves. Associates with enzymatically active telomerase. The chain is CST complex subunit CTC1 from Arabidopsis thaliana (Mouse-ear cress).